The sequence spans 170 residues: MKDVYLYIVEKSVAWEFDSPEYGRLARKVAEMLYERKEDLTDDRIAILLNISTAETRRILQYLMRLNLVGVKKRTTEDYRIEYTWYVDDEIIKQAIGGRARTAREKISMLIRALTEGSYYICPNCHMRYSLDEAVNKGGVCPVCGAELEYVESLEEINKLTKVLQKLEKL.

The region spanning Met1 to Lys93 is the HTH TFE/IIEalpha-type domain.

The protein belongs to the TFE family. In terms of assembly, monomer. Interaction with RNA polymerase subunits RpoF and RpoE is necessary for Tfe stimulatory transcription activity. Able to interact with Tbp and RNA polymerase in the absence of DNA promoter. Interacts both with the preinitiation and elongation complexes.

Its function is as follows. Transcription factor that plays a role in the activation of archaeal genes transcribed by RNA polymerase. Facilitates transcription initiation by enhancing TATA-box recognition by TATA-box-binding protein (Tbp), and transcription factor B (Tfb) and RNA polymerase recruitment. Not absolutely required for transcription in vitro, but particularly important in cases where Tbp or Tfb function is not optimal. It dynamically alters the nucleic acid-binding properties of RNA polymerases by stabilizing the initiation complex and destabilizing elongation complexes. Seems to translocate with the RNA polymerase following initiation and acts by binding to the non template strand of the transcription bubble in elongation complexes. This Pyrobaculum aerophilum (strain ATCC 51768 / DSM 7523 / JCM 9630 / CIP 104966 / NBRC 100827 / IM2) protein is Transcription factor E.